A 218-amino-acid polypeptide reads, in one-letter code: Ropporin-1-like protein (218 aa).

The 30-residue stretch at 17–46 folds into the RIIa domain; the sequence is PELTDILKQFTKAAIRTQPADVLQWSAGYF.

This sequence belongs to the ropporin family. In terms of assembly, component of the axonemal radial spoke complex 1 (RS1), at least composed of spoke head proteins RSPH1, RSPH3, RSPH9 and the cilia-specific component RSPH4A or sperm-specific component RSPH6A, spoke stalk proteins RSPH14, DNAJB13, DYDC1, ROPN1L and NME5, and the anchor protein IQUB. May interact with AKAP3. Interacts with FSCB; the interaction increases upon spermatozoa capacitation conditions. Interacts with CFAP61. In terms of processing, sumoylated, sumoylation decreases upon spermatozoa capacitation conditions.

It localises to the cell projection. The protein localises to the cilium. The protein resides in the flagellum. Functionally, functions as part of axonemal radial spoke complexes that play an important part in the motility of sperm and cilia. Important for male fertility. With ROPN1, involved in fibrous sheath integrity and sperm motility, plays a role in PKA-dependent signaling processes required for spermatozoa capacitation. The polypeptide is Ropporin-1-like protein (ROPN1L) (Bos taurus (Bovine)).